Here is a 435-residue protein sequence, read N- to C-terminus: Tyrosine-protein phosphatase non-receptor type 1 (435 aa).

Met1 is subject to N-acetylmethionine. One can recognise a Tyrosine-protein phosphatase domain in the interval 3–277 (MEKEFEQIDK…RFSYLAVIEG (275 aa)). Tyr20 is subject to Phosphotyrosine. Position 50 is a phosphoserine; by PKB/AKT1, CLK1 and CLK2 (Ser50). Phosphotyrosine; by EGFR is present on Tyr66. Substrate contacts are provided by residues Asp181 and 215-221 (CSAGIGR). Cys215 (phosphocysteine intermediate) is an active-site residue. Cys215 is modified (cysteine persulfide; alternate). Position 215 is a cysteine sulfenic acid (-SOH); alternate (Cys215). Position 215 is a cysteine sulfinic acid (-SO2H); alternate (Cys215). The residue at position 215 (Cys215) is an S-nitrosocysteine; in reversibly inhibited form. The n,N-(cysteine-1,S-diyl)serine (Cys-Ser); in inhibited form cross-link spans 215–216 (CS). Residues Ser242 and Ser243 each carry the phosphoserine; by CLK1 and CLK2 modification. Residue Gln262 coordinates substrate. Residues 338 to 351 (TQEDKDCPIKEEKG) show a composition bias toward basic and acidic residues. Positions 338-359 (TQEDKDCPIKEEKGSPLNAAPY) are disordered. A phosphoserine mark is found at Ser352, Ser363, and Ser365. Thr368 bears the Phosphothreonine mark. Residue Ser378 is modified to Phosphoserine; by PKC. A disordered region spans residues 378–398 (SLRGAQAASPAKGEPSLPEKD). Ser386 bears the Phosphoserine; by CDK1 mark.

It belongs to the protein-tyrosine phosphatase family. Non-receptor class 1 subfamily. In terms of assembly, interacts with EPHA3 (phosphorylated); dephosphorylates EPHA3 and may regulate its trafficking and function. Interacts with MET. Interacts with NCK1. Post-translationally, oxidized on Cys-215; the Cys-SOH formed in response to redox signaling reacts with the alpha-amido of the following residue to form a sulfenamide cross-link, triggering a conformational change that inhibits substrate binding and activity. The active site can be restored by reduction. Ser-50 is the major site of phosphorylation as compared to Ser-242 and Ser-243. Activated by phosphorylation at Ser-50. In terms of processing, S-nitrosylation of Cys-215 inactivates the enzyme activity. Post-translationally, sulfhydration at Cys-215 following endoplasmic reticulum stress inactivates the enzyme activity, promoting EIF2AK3/PERK activity. Expressed in keratinocytes (at protein level).

It localises to the endoplasmic reticulum membrane. The catalysed reaction is O-phospho-L-tyrosyl-[protein] + H2O = L-tyrosyl-[protein] + phosphate. Its function is as follows. Tyrosine-protein phosphatase which acts as a regulator of endoplasmic reticulum unfolded protein response. Mediates dephosphorylation of EIF2AK3/PERK; inactivating the protein kinase activity of EIF2AK3/PERK. May play an important role in CKII- and p60c-src-induced signal transduction cascades. May regulate the EFNA5-EPHA3 signaling pathway which modulates cell reorganization and cell-cell repulsion. May also regulate the hepatocyte growth factor receptor signaling pathway through dephosphorylation of MET. This is Tyrosine-protein phosphatase non-receptor type 1 (PTPN1) from Homo sapiens (Human).